We begin with the raw amino-acid sequence, 336 residues long: Anthranilate phosphoribosyltransferase (336 aa).

Residues G79, 82–83, T87, 89–92, 107–115, and S119 each bind 5-phospho-alpha-D-ribose 1-diphosphate; these read GD, NIST, and KHGNRAMSS. G79 lines the anthranilate pocket. S91 contributes to the Mg(2+) binding site. N110 serves as a coordination point for anthranilate. R165 serves as a coordination point for anthranilate. Mg(2+) is bound by residues D225 and E226.

The protein belongs to the anthranilate phosphoribosyltransferase family. As to quaternary structure, homodimer. The cofactor is Mg(2+).

The catalysed reaction is N-(5-phospho-beta-D-ribosyl)anthranilate + diphosphate = 5-phospho-alpha-D-ribose 1-diphosphate + anthranilate. The protein operates within amino-acid biosynthesis; L-tryptophan biosynthesis; L-tryptophan from chorismate: step 2/5. Its function is as follows. Catalyzes the transfer of the phosphoribosyl group of 5-phosphorylribose-1-pyrophosphate (PRPP) to anthranilate to yield N-(5'-phosphoribosyl)-anthranilate (PRA). This is Anthranilate phosphoribosyltransferase from Dictyoglomus turgidum (strain DSM 6724 / Z-1310).